A 393-amino-acid chain; its full sequence is NAD(P)H-quinone oxidoreductase subunit H, chloroplastic (393 aa).

The protein belongs to the complex I 49 kDa subunit family. In terms of assembly, NDH is composed of at least 16 different subunits, 5 of which are encoded in the nucleus.

It localises to the plastid. It is found in the chloroplast thylakoid membrane. It carries out the reaction a plastoquinone + NADH + (n+1) H(+)(in) = a plastoquinol + NAD(+) + n H(+)(out). The catalysed reaction is a plastoquinone + NADPH + (n+1) H(+)(in) = a plastoquinol + NADP(+) + n H(+)(out). NDH shuttles electrons from NAD(P)H:plastoquinone, via FMN and iron-sulfur (Fe-S) centers, to quinones in the photosynthetic chain and possibly in a chloroplast respiratory chain. The immediate electron acceptor for the enzyme in this species is believed to be plastoquinone. Couples the redox reaction to proton translocation, and thus conserves the redox energy in a proton gradient. The sequence is that of NAD(P)H-quinone oxidoreductase subunit H, chloroplastic from Olimarabidopsis pumila (Dwarf rocket).